A 422-amino-acid chain; its full sequence is Enolase (422 aa).

Gln162 is a binding site for (2R)-2-phosphoglycerate. Glu204 functions as the Proton donor in the catalytic mechanism. Positions 241, 284, and 311 each coordinate Mg(2+). Residues Lys336, Arg365, Ser366, and Lys387 each contribute to the (2R)-2-phosphoglycerate site. The active-site Proton acceptor is Lys336.

It belongs to the enolase family. As to quaternary structure, component of the RNA degradosome, a multiprotein complex involved in RNA processing and mRNA degradation. The cofactor is Mg(2+).

The protein localises to the cytoplasm. It localises to the secreted. The protein resides in the cell surface. The catalysed reaction is (2R)-2-phosphoglycerate = phosphoenolpyruvate + H2O. Its pathway is carbohydrate degradation; glycolysis; pyruvate from D-glyceraldehyde 3-phosphate: step 4/5. Functionally, catalyzes the reversible conversion of 2-phosphoglycerate (2-PG) into phosphoenolpyruvate (PEP). It is essential for the degradation of carbohydrates via glycolysis. This chain is Enolase, found in Legionella pneumophila (strain Lens).